Consider the following 545-residue polypeptide: Methionine--tRNA ligase (545 aa).

Positions 15 to 25 (PYANGPIHIGH) match the 'HIGH' region motif. Residues C146, C149, C159, and C162 each contribute to the Zn(2+) site. The 'KMSKS' region signature appears at 332–336 (KLSKS). K335 lines the ATP pocket.

The protein belongs to the class-I aminoacyl-tRNA synthetase family. MetG type 1 subfamily. Monomer. It depends on Zn(2+) as a cofactor.

Its subcellular location is the cytoplasm. The catalysed reaction is tRNA(Met) + L-methionine + ATP = L-methionyl-tRNA(Met) + AMP + diphosphate. Is required not only for elongation of protein synthesis but also for the initiation of all mRNA translation through initiator tRNA(fMet) aminoacylation. This Buchnera aphidicola subsp. Schizaphis graminum (strain Sg) protein is Methionine--tRNA ligase (metG).